The sequence spans 274 residues: Dermonecrotic toxin SdSicTox-betaIIB1bi (274 aa).

H5 is a catalytic residue. Mg(2+)-binding residues include E25 and D27. H41 (nucleophile) is an active-site residue. Disulfide bonds link C45–C51 and C47–C190. Residue D85 coordinates Mg(2+).

It belongs to the arthropod phospholipase D family. Class II subfamily. Requires Mg(2+) as cofactor. In terms of tissue distribution, expressed by the venom gland.

It is found in the secreted. It catalyses the reaction an N-(acyl)-sphingosylphosphocholine = an N-(acyl)-sphingosyl-1,3-cyclic phosphate + choline. The catalysed reaction is an N-(acyl)-sphingosylphosphoethanolamine = an N-(acyl)-sphingosyl-1,3-cyclic phosphate + ethanolamine. It carries out the reaction a 1-acyl-sn-glycero-3-phosphocholine = a 1-acyl-sn-glycero-2,3-cyclic phosphate + choline. The enzyme catalyses a 1-acyl-sn-glycero-3-phosphoethanolamine = a 1-acyl-sn-glycero-2,3-cyclic phosphate + ethanolamine. Functionally, dermonecrotic toxins cleave the phosphodiester linkage between the phosphate and headgroup of certain phospholipids (sphingolipid and lysolipid substrates), forming an alcohol (often choline) and a cyclic phosphate. This toxin acts on sphingomyelin (SM). It may also act on ceramide phosphoethanolamine (CPE), lysophosphatidylcholine (LPC) and lysophosphatidylethanolamine (LPE), but not on lysophosphatidylserine (LPS), and lysophosphatidylglycerol (LPG). It acts by transphosphatidylation, releasing exclusively cyclic phosphate products as second products. Induces dermonecrosis, hemolysis, increased vascular permeability, edema, inflammatory response, and platelet aggregation. This Sicarius cf. damarensis (strain GJB-2008) (Six-eyed sand spider) protein is Dermonecrotic toxin SdSicTox-betaIIB1bi.